Consider the following 400-residue polypeptide: Acetylornithine aminotransferase (400 aa).

Pyridoxal 5'-phosphate is bound by residues 106–107 and Phe-132; that span reads GA. A N(2)-acetyl-L-ornithine-binding site is contributed by Arg-135. A pyridoxal 5'-phosphate-binding site is contributed by 217–220; that stretch reads DEVQ. N6-(pyridoxal phosphate)lysine is present on Lys-246. Ser-274 serves as a coordination point for N(2)-acetyl-L-ornithine. Thr-275 is a pyridoxal 5'-phosphate binding site.

This sequence belongs to the class-III pyridoxal-phosphate-dependent aminotransferase family. ArgD subfamily. In terms of assembly, homodimer. Requires pyridoxal 5'-phosphate as cofactor.

It is found in the cytoplasm. The enzyme catalyses N(2)-acetyl-L-ornithine + 2-oxoglutarate = N-acetyl-L-glutamate 5-semialdehyde + L-glutamate. It functions in the pathway amino-acid biosynthesis; L-arginine biosynthesis; N(2)-acetyl-L-ornithine from L-glutamate: step 4/4. The protein is Acetylornithine aminotransferase of Streptomyces clavuligerus.